Here is a 184-residue protein sequence, read N- to C-terminus: MESFSSKSLALQAEKKLLSKMAGRSVAHLFIDETSSEVLDELYRVSKEYTHSRPKAQRVIKDLIKVAVKVAVLHRSGCFGPGELALATRFRQKLRQGAMTALSFGEVDFTFEAAVLAGLLVECRDILLELVEHHLTPKSHDRIRHVFDHYSDPDLLAALYGPDFTQHLGKICDGLRKLLDEGKL.

A Phosphoserine modification is found at Ser3.

Belongs to the TNFAIP8 family. TNFAIP8L2 subfamily. In terms of assembly, may interact with CASP8; however, such result is unclear since could not reproduce the interaction with CASP8. Interacts with RAC1. Post-translationally, phosphorylated by TAK1/MAP3K7; this phosphorylation triggers association with BTRC and subsequent ubiquitination and degradation. Ubiquitinated in a BTRC-depdent manner; leading to degradation mediated through the proteasome pathway. As to expression, expressed in thymus, spleen, lymph node and small intestine, but not in liver, heart, muscle, testis, spinal cord or brain. Up-regulated in the spinal cord of mice with experimental autoimmune encephalomyelitis. Constitutively expressed by macrophages, B and T-lymphocytes at various developmental stages.

Its subcellular location is the cytoplasm. The protein resides in the nucleus. The protein localises to the lysosome. Its function is as follows. Acts as a negative regulator of innate and adaptive immunity by maintaining immune homeostasis. Plays a regulatory role in the Toll-like signaling pathway by determining the strength of LPS-induced signaling and gene expression. Inhibits TCR-mediated T-cell activation and negatively regulate T-cell function to prevent hyperresponsiveness. Also inhibits autolysosome formation via negatively modulating MTOR activation by interacting with RAC1 and promoting the disassociation of the RAC1-MTOR complex. Plays an essential role in NK-cell biology by acting as a checkpoint and displaying an expression pattern correlating with NK-cell maturation process and by negatively regulating NK-cell maturation and antitumor immunity. Mechanistically, suppresses IL-15-triggered mTOR activity in NK-cells. This Mus musculus (Mouse) protein is Tumor necrosis factor alpha-induced protein 8-like protein 2 (Tnfaip8l2).